Reading from the N-terminus, the 174-residue chain is Eukaryotic translation elongation factor 1 epsilon-1 (174 aa).

A2 carries the post-translational modification N-acetylalanine. Residues 2-56 (AAAAELKLLEKSLGLRPGNKYSAQGERQIPVLQTNNGPSLTGLATIATHLVKQAS) are N-terminal. The region spanning 50-173 (HLVKQASKEH…FIKNRLYANS (124 aa)) is the GST C-terminal domain. Residues 57-63 (KEHLLGS) are linker. The segment at 64 to 152 (TAEEKALVQQ…SRWFCHIQHY (89 aa)) is C-terminal. Position 138 is an N6-acetyllysine (K138). The stretch at 153 to 169 (PDIRQHLSSVVFIKNRL) forms a coiled coil.

Part of a multisubunit complex that groups tRNA ligases for Arg (RARS1), Asp (DARS1), Gln (QARS1), Ile (IARS1), Leu (LARS1), Lys (KARS1), Met (MARS1) the bifunctional ligase for Glu and Pro (EPRS1) and the auxiliary subunits AIMP1/p43, AIMP2/p38 and EEF1E1/p18. Can interact simultaneously with MARS1 and EPRS1. Forms a linear complex that contains MARS1, EEF1E1, EPRS1 and AIMP2 that is at the core of the multisubunit complex. Interacts with ATM and ATR. The interaction with ATM, which takes place independently of TP53, is induced by DNA damage that may occur during genotoxic stress or cell growth. The interaction with ATR is enhanced by UV irradiation.

The protein localises to the cytoplasm. Its subcellular location is the nucleus. Functionally, positive modulator of ATM response to DNA damage. The polypeptide is Eukaryotic translation elongation factor 1 epsilon-1 (EEF1E1) (Cricetulus griseus (Chinese hamster)).